We begin with the raw amino-acid sequence, 226 residues long: Ribosome-recycling factor, mitochondrial (226 aa).

It belongs to the RRF family.

It is found in the mitochondrion. Functionally, necessary for protein synthesis in mitochondria. Functions as a ribosome recycling factor in mitochondria. The protein is Ribosome-recycling factor, mitochondrial (RRF1) of Eremothecium gossypii (strain ATCC 10895 / CBS 109.51 / FGSC 9923 / NRRL Y-1056) (Yeast).